Consider the following 27-residue polypeptide: Cupiennin-3a (27 aa).

A Glutamic acid 1-amide modification is found at E27.

As to expression, expressed by the venom gland.

The protein localises to the secreted. In Cupiennius salei (American wandering spider), this protein is Cupiennin-3a.